The following is a 536-amino-acid chain: Probable tyrosyl-DNA phosphodiesterase (536 aa).

The active-site Nucleophile is His-122. A substrate-binding site is contributed by Lys-124. The interaction with DNA stretch occupies residues 315–318 (SMGS). His-401 serves as the catalytic Proton donor/acceptor. Residue Lys-403 participates in substrate binding.

The protein belongs to the tyrosyl-DNA phosphodiesterase family.

Its subcellular location is the nucleus. DNA repair enzyme that can remove a variety of covalent adducts from DNA through hydrolysis of a 3'-phosphodiester bond, giving rise to DNA with a free 3' phosphate. Catalyzes the hydrolysis of dead-end complexes between DNA and the topoisomerase I active site tyrosine residue. Hydrolyzes 3'-phosphoglycolates on protruding 3' ends on DNA double-strand breaks due to DNA damage by radiation and free radicals. Acts on blunt-ended double-strand DNA breaks and on single-stranded DNA. May have low 3'exonuclease activity and may be able to remove a single nucleoside from the 3'end of DNA and RNA molecules with 3'hydroxyl groups. Has no exonuclease activity towards DNA or RNA with a 3'phosphate. The protein is Probable tyrosyl-DNA phosphodiesterase of Schizosaccharomyces pombe (strain 972 / ATCC 24843) (Fission yeast).